A 22-amino-acid polypeptide reads, in one-letter code: GMATKAGTALGKVAKAVIGAAL.

The residue at position 22 (L22) is a Leucine amide.

As to expression, skin.

The protein resides in the secreted. Functionally, has very strong antimicrobial activity against Gram-positive bacterium S.aureus, Gram-negative bacterium E.coli and yeast C.albicans. Has strong hemolytic activity against human red blood cells. This Xenopus tropicalis (Western clawed frog) protein is Antimicrobial peptide 5.